The sequence spans 341 residues: Methionine import ATP-binding protein MetN 1 (341 aa).

Residues 2–241 (IEFKNVNKVF…PQTNTAKNFV (240 aa)) enclose the ABC transporter domain. 38-45 (GYSGAGKS) is an ATP binding site.

The protein belongs to the ABC transporter superfamily. Methionine importer (TC 3.A.1.24) family. In terms of assembly, the complex is composed of two ATP-binding proteins (MetN), two transmembrane proteins (MetI) and a solute-binding protein (MetQ).

The protein localises to the cell membrane. The enzyme catalyses L-methionine(out) + ATP + H2O = L-methionine(in) + ADP + phosphate + H(+). The catalysed reaction is D-methionine(out) + ATP + H2O = D-methionine(in) + ADP + phosphate + H(+). Part of the ABC transporter complex MetNIQ involved in methionine import. Responsible for energy coupling to the transport system. The sequence is that of Methionine import ATP-binding protein MetN 1 from Staphylococcus epidermidis (strain ATCC 35984 / DSM 28319 / BCRC 17069 / CCUG 31568 / BM 3577 / RP62A).